Consider the following 85-residue polypeptide: Small ribosomal subunit protein uS17 (85 aa).

It belongs to the universal ribosomal protein uS17 family. Part of the 30S ribosomal subunit.

Functionally, one of the primary rRNA binding proteins, it binds specifically to the 5'-end of 16S ribosomal RNA. In Blochmanniella floridana, this protein is Small ribosomal subunit protein uS17.